The sequence spans 1193 residues: Protogenin (1193 aa).

The N-terminal stretch at 1 to 23 is a signal peptide; the sequence is MAPPVRPGMLPLLLLLLLPPLGS. Ig-like domains lie at 24–124, 126–217, 230–317, and 322–406; these read VPGV…AHLT, STIS…ASLT, PTII…ATLT, and PSFV…ARLT. Topologically, residues 24 to 944 are extracellular; that stretch reads VPGVWSFSEL…YYHLDQKSMT (921 aa). 2 cysteine pairs are disulfide-bonded: Cys-54–Cys-107 and Cys-150–Cys-200. N-linked (GlcNAc...) asparagine glycosylation is present at Asn-84. N-linked (GlcNAc...) asparagine glycosylation occurs at Asn-238. Disulfide bonds link Cys-251/Cys-299 and Cys-343/Cys-390. 5 consecutive Fibronectin type-III domains span residues 416-510, 512-608, 613-712, 719-812, and 817-912; these read APYN…TLED, PLRP…TPKA, APKS…VRDR, PPHH…TLPE, and PPVG…VLPK. The N-linked (GlcNAc...) asparagine glycan is linked to Asn-625. Residues 945–965 traverse the membrane as a helical segment; sequence GIAVGVGIALTCILICVLILI. The Cytoplasmic segment spans residues 966–1193; the sequence is YRSKARKSSA…LRHAAESVPV (228 aa). Disordered stretches follow at residues 974-1018 and 1078-1193; these read SASK…PMMP and VLIS…SVPV. Composition is skewed to polar residues over residues 978–990 and 1086–1095; these read TTQSGTQPLSRAS and PSSPGQTTSF. Positions 1105 to 1133 are enriched in basic and acidic residues; sequence DTEHSANSEGSHETGDSGRFSHESNDEIH. Over residues 1136-1150 the composition is skewed to polar residues; that stretch reads SVISSTPPTSNSLTC.

It belongs to the immunoglobulin superfamily. DCC family.

Its subcellular location is the membrane. In terms of biological role, may play a role in anteroposterior axis elongation. In Rattus norvegicus (Rat), this protein is Protogenin.